Here is a 345-residue protein sequence, read N- to C-terminus: Nicotinate-nucleotide--dimethylbenzimidazole phosphoribosyltransferase (345 aa).

The active-site Proton acceptor is glutamate 312.

It belongs to the CobT family.

The catalysed reaction is 5,6-dimethylbenzimidazole + nicotinate beta-D-ribonucleotide = alpha-ribazole 5'-phosphate + nicotinate + H(+). The protein operates within nucleoside biosynthesis; alpha-ribazole biosynthesis; alpha-ribazole from 5,6-dimethylbenzimidazole: step 1/2. Catalyzes the synthesis of alpha-ribazole-5'-phosphate from nicotinate mononucleotide (NAMN) and 5,6-dimethylbenzimidazole (DMB). This Bacteroides fragilis (strain YCH46) protein is Nicotinate-nucleotide--dimethylbenzimidazole phosphoribosyltransferase.